Here is a 502-residue protein sequence, read N- to C-terminus: Probable cytosol aminopeptidase (502 aa).

Lysine 254 and aspartate 259 together coordinate Mn(2+). Residue lysine 266 is part of the active site. 3 residues coordinate Mn(2+): aspartate 277, aspartate 336, and glutamate 338. Arginine 340 is a catalytic residue.

This sequence belongs to the peptidase M17 family. Mn(2+) serves as cofactor.

It is found in the cytoplasm. It carries out the reaction Release of an N-terminal amino acid, Xaa-|-Yaa-, in which Xaa is preferably Leu, but may be other amino acids including Pro although not Arg or Lys, and Yaa may be Pro. Amino acid amides and methyl esters are also readily hydrolyzed, but rates on arylamides are exceedingly low.. It catalyses the reaction Release of an N-terminal amino acid, preferentially leucine, but not glutamic or aspartic acids.. Its function is as follows. Presumably involved in the processing and regular turnover of intracellular proteins. Catalyzes the removal of unsubstituted N-terminal amino acids from various peptides. This Tropheryma whipplei (strain TW08/27) (Whipple's bacillus) protein is Probable cytosol aminopeptidase.